Reading from the N-terminus, the 346-residue chain is Large ribosomal subunit protein uL3 (346 aa).

Residues 324 to 346 (RPPKKKPPVERPQITYVSRESKQ) are disordered.

Belongs to the universal ribosomal protein uL3 family. As to quaternary structure, part of the 50S ribosomal subunit. Forms a cluster with proteins L14 and L24e.

Functionally, one of the primary rRNA binding proteins, it binds directly near the 3'-end of the 23S rRNA, where it nucleates assembly of the 50S subunit. In Thermococcus kodakarensis (strain ATCC BAA-918 / JCM 12380 / KOD1) (Pyrococcus kodakaraensis (strain KOD1)), this protein is Large ribosomal subunit protein uL3.